We begin with the raw amino-acid sequence, 115 residues long: Large ribosomal subunit protein bL20c (115 aa).

Belongs to the bacterial ribosomal protein bL20 family.

Its subcellular location is the plastid. It is found in the organellar chromatophore. In terms of biological role, binds directly to 23S ribosomal RNA and is necessary for the in vitro assembly process of the 50S ribosomal subunit. It is not involved in the protein synthesizing functions of that subunit. The sequence is that of Large ribosomal subunit protein bL20c from Paulinella chromatophora.